A 185-amino-acid chain; its full sequence is Protein N-terminal glutamine amidohydrolase (185 aa).

Residues cysteine 14, histidine 62, and aspartate 78 contribute to the active site.

This sequence belongs to the NTAQ1 family. As to quaternary structure, monomer.

The enzyme catalyses N-terminal L-glutaminyl-[protein] + H2O = N-terminal L-glutamyl-[protein] + NH4(+). Mediates the side-chain deamidation of N-terminal glutamine residues to glutamate, an important step in N-end rule pathway of protein degradation. Conversion of the resulting N-terminal glutamine to glutamate renders the protein susceptible to arginylation, polyubiquitination and degradation as specified by the N-end rule. Does not act on substrates with internal or C-terminal glutamine and does not act on non-glutamine residues in any position. The chain is Protein N-terminal glutamine amidohydrolase from Caenorhabditis briggsae.